A 258-amino-acid chain; its full sequence is Transmembrane O-methyltransferase homolog (258 aa).

S-adenosyl-L-methionine contacts are provided by residues Glu104, Gly106–Thr107, Ser112, Glu130, and Ser160.

The protein belongs to the class I-like SAM-binding methyltransferase superfamily. Cation-dependent O-methyltransferase family. As to quaternary structure, interacts with LHFPL5, PCDH15, TMC1, TMC2 and TMIE. Interacts directly with TMC1. The interaction of TOMT with TMC1 and TMC2 is required for the transportation of TMC1/2 into the stereocilia of hair cells.

It localises to the cytoplasm. It is found in the endoplasmic reticulum. The catalysed reaction is a catechol + S-adenosyl-L-methionine = a guaiacol + S-adenosyl-L-homocysteine + H(+). Functionally, catalyzes the O-methylation, and thereby the inactivation, of catecholamine neurotransmitters and catechol hormones. Required for auditory function. Component of the cochlear hair cell's mechanotransduction (MET) machinery. Involved in the assembly of the asymmetric tip-link MET complex. Required for transportation of TMC1 and TMC2 proteins into the mechanically sensitive stereocilia of the hair cells. The function in MET is independent of the enzymatic activity. The polypeptide is Transmembrane O-methyltransferase homolog (Rattus norvegicus (Rat)).